Reading from the N-terminus, the 99-residue chain is Transmembrane protein 14A (99 aa).

The next 3 helical transmembrane spans lie at 1–21, 24–44, and 79–99; these read MDLI…LGYK, GGVP…YGAY, and PAGL…LLLL.

This sequence belongs to the TMEM14 family.

It localises to the mitochondrion membrane. The protein localises to the endoplasmic reticulum membrane. Inhibits apoptosis via negative regulation of the mitochondrial outer membrane permeabilization involved in apoptotic signaling pathway. This chain is Transmembrane protein 14A (Tmem14a), found in Mus musculus (Mouse).